Here is a 367-residue protein sequence, read N- to C-terminus: uncharacterized protein (367 aa).

This sequence to M.tuberculosis Rv0502.

This is an uncharacterized protein from Mycobacterium leprae (strain TN).